A 567-amino-acid chain; its full sequence is Zinc finger protein 143 (567 aa).

7 consecutive C2H2-type zinc fingers follow at residues 230-254 (FRCDYEGCGKLYTTAHHLKVHERSH), 260-284 (YQCDHGGCRKAFATGYGLKSHVRTH), 290-314 (YRCSEENCTKSFKTSGDLQKHVRTH), 320-344 (FKCPFEGCGRSFTTSNIRKVHIRTH), 350-374 (YYCSEPGCGRAFASATNYKNHVRIH), 380-404 (YVCTVPGCDKRFTEYSSLYKHHVVH), and 410-433 (YNCNHCGKTYKQISTLAMHKRTAH). The segment covering 506-520 (SATESGPQHSHNLGG) has biased composition (polar residues). Residues 506 to 525 (SATESGPQHSHNLGGSESRP) are disordered.

It belongs to the GLI C2H2-type zinc-finger protein family.

The protein localises to the nucleus. Transcriptional activator. Activates the gene for selenocysteine tRNA (tRNAsec). Binds to the activator element (AE) motif of the selenocysteine tRNA gene promoter. The chain is Zinc finger protein 143 (znf143) from Xenopus tropicalis (Western clawed frog).